We begin with the raw amino-acid sequence, 234 residues long: DNA repair protein RecO (234 aa).

The protein belongs to the RecO family.

Functionally, involved in DNA repair and RecF pathway recombination. This chain is DNA repair protein RecO, found in Halorhodospira halophila (strain DSM 244 / SL1) (Ectothiorhodospira halophila (strain DSM 244 / SL1)).